Reading from the N-terminus, the 299-residue chain is tRNA dimethylallyltransferase (299 aa).

8–15 (GPTASGKT) is a binding site for ATP. A substrate-binding site is contributed by 10–15 (TASGKT). The interaction with substrate tRNA stretch occupies residues 33 to 36 (DSQQ).

It belongs to the IPP transferase family. Monomer. It depends on Mg(2+) as a cofactor.

The catalysed reaction is adenosine(37) in tRNA + dimethylallyl diphosphate = N(6)-dimethylallyladenosine(37) in tRNA + diphosphate. Its function is as follows. Catalyzes the transfer of a dimethylallyl group onto the adenine at position 37 in tRNAs that read codons beginning with uridine, leading to the formation of N6-(dimethylallyl)adenosine (i(6)A). The sequence is that of tRNA dimethylallyltransferase from Anaeromyxobacter dehalogenans (strain 2CP-C).